The primary structure comprises 334 residues: Anthranilate phosphoribosyltransferase (334 aa).

5-phospho-alpha-D-ribose 1-diphosphate-binding positions include G79, 82–83, S87, 89–92, 107–115, and S119; these read GD, NIST, and KHGNRSISS. G79 contributes to the anthranilate binding site. S91 is a binding site for Mg(2+). N110 serves as a coordination point for anthranilate. Anthranilate is bound at residue R165. Mg(2+) is bound by residues D224 and E225.

This sequence belongs to the anthranilate phosphoribosyltransferase family. Homodimer. The cofactor is Mg(2+).

It catalyses the reaction N-(5-phospho-beta-D-ribosyl)anthranilate + diphosphate = 5-phospho-alpha-D-ribose 1-diphosphate + anthranilate. The protein operates within amino-acid biosynthesis; L-tryptophan biosynthesis; L-tryptophan from chorismate: step 2/5. Functionally, catalyzes the transfer of the phosphoribosyl group of 5-phosphorylribose-1-pyrophosphate (PRPP) to anthranilate to yield N-(5'-phosphoribosyl)-anthranilate (PRA). The sequence is that of Anthranilate phosphoribosyltransferase from Streptococcus pneumoniae (strain 70585).